Reading from the N-terminus, the 215-residue chain is Cytochrome b6 (215 aa).

The helical transmembrane segment at 32–52 threads the bilayer; it reads IFYCLGGITFTCFLLQVASGF. Position 35 (Cys35) interacts with heme c. Heme b contacts are provided by His86 and His100. Helical transmembrane passes span 90–110, 116–136, and 186–206; these read ASMMVLTMILHVFRVYLTGGF, LTWVTGVILAVLTVSFGVTGY, and LHTFILPLLTAVFMLMHFLMI. The heme b site is built by His187 and His202.

The protein belongs to the cytochrome b family. PetB subfamily. The 4 large subunits of the cytochrome b6-f complex are cytochrome b6, subunit IV (17 kDa polypeptide, PetD), cytochrome f and the Rieske protein, while the 4 small subunits are PetG, PetL, PetM and PetN. The complex functions as a dimer. Heme b serves as cofactor. The cofactor is heme c.

The protein localises to the plastid. It localises to the chloroplast thylakoid membrane. Component of the cytochrome b6-f complex, which mediates electron transfer between photosystem II (PSII) and photosystem I (PSI), cyclic electron flow around PSI, and state transitions. In Coleochaete orbicularis (Charophycean green alga), this protein is Cytochrome b6.